We begin with the raw amino-acid sequence, 60 residues long: MAVPKFKPSKSRSRTRRSINMRKKIPQFQECSNCGNLGVRHRICLKCGYYRNNQYLEIGL.

This sequence belongs to the bacterial ribosomal protein bL32 family.

This chain is Large ribosomal subunit protein bL32 (rpmF), found in Borreliella burgdorferi (strain ATCC 35210 / DSM 4680 / CIP 102532 / B31) (Borrelia burgdorferi).